Consider the following 150-residue polypeptide: C-C motif chemokine 25 (150 aa).

The first 23 residues, methionine 1 to threonine 23, serve as a signal peptide directing secretion. Intrachain disulfides connect cysteine 30/cysteine 58 and cysteine 31/cysteine 75.

The protein belongs to the intercrine beta (chemokine CC) family. Specifically expressed by thymic dendritic cells. High levels in thymus and small intestine.

The protein localises to the secreted. Its function is as follows. Potentially involved in T-cell development. Recombinant protein shows chemotactic activity on thymocytes, macrophages, THP-1 cells, and dendritics cells but is inactive on peripheral blood lymphocytes and neutrophils. Binds to CCR9. Isoform 2 is an antagonist of isoform 1. Binds to atypical chemokine receptor ACKR4 and mediates the recruitment of beta-arrestin (ARRB1/2) to ACKR4. The chain is C-C motif chemokine 25 (CCL25) from Homo sapiens (Human).